Here is a 443-residue protein sequence, read N- to C-terminus: Frizzled/smoothened-like sans CRD protein E (443 aa).

A signal peptide spans 1–23 (MISHIKKFINLYTIVFLLYILYS). Topologically, residues 24-83 (NENFFVKGQKLPPGFCPSPLIYRNTTDRQSDIDIGFQFLGETNCVQPCPSLILTENEWNK) are extracellular. An N-linked (GlcNAc...) asparagine glycan is attached at N47. Residues 84–104 (VFNMSLVAGTISMFALIFLII) traverse the membrane as a helical segment. The Cytoplasmic portion of the chain corresponds to 105-120 (TYSPLVNNIKDYTRHT). The chain crosses the membrane as a helical span at residues 121 to 141 (VGILFLFSGILIAMTTDGRQL). Residues 142 to 166 (WDIDLGFKKYCPEPGRFARQSDSKC) are Extracellular-facing. The chain crosses the membrane as a helical span at residues 167–187 (LVTAIFFQFGCVTALLWWAAI). Topologically, residues 188–203 (SVDLWITIKKIKISKK) are cytoplasmic. The chain crosses the membrane as a helical span at residues 204 to 224 (LFIIYTIAVNIVTIVLTFGPV). The Extracellular segment spans residues 225-248 (GSKQYGYIDAAIGCWLMDLKYQVG). A helical membrane pass occupies residues 249–269 (YFWAPVGFCLCVGCVSIVLIL). Residues 270–289 (KEIYNVSDAVKKKLLAKHLK) are Cytoplasmic-facing. Residues 290 to 310 (PLMLIILMLTEFIYMFIFYSY) form a helical membrane-spanning segment. At 311–350 (TTSKKNHYHDIIEEYVVCLFVHAANPSVCKIGSTISPSAH) the chain is on the extracellular side. A helical transmembrane segment spans residues 351-371 (FFFHLCIRLMGLEVLIFYGFT). Residues 372–443 (RQTRKIWMRS…SGIDDSKHDP (72 aa)) are Cytoplasmic-facing. 2 stretches are compositionally biased toward low complexity: residues 397–410 (SSSN…NKTS) and 419–432 (ESSE…QSIE). Residues 397–443 (SSSNDSKSSNNKTSGRVTGGFGESSEQSNEPEQSIELSGIDDSKHDP) form a disordered region.

The protein belongs to the G-protein coupled receptor Fz/Smo family.

The protein resides in the membrane. This Dictyostelium discoideum (Social amoeba) protein is Frizzled/smoothened-like sans CRD protein E (fscE).